We begin with the raw amino-acid sequence, 110 residues long: BolA-like protein 3 (110 aa).

This sequence belongs to the BolA/IbaG family. In terms of assembly, interacts with NFU1.

The protein localises to the mitochondrion. Acts as a mitochondrial iron-sulfur (Fe-S) cluster assembly factor that facilitates (Fe-S) cluster insertion into a subset of mitochondrial proteins. Probably acts together with NFU1. The chain is BolA-like protein 3 (Bola3) from Mus musculus (Mouse).